Consider the following 429-residue polypeptide: Asparagine--tRNA ligase (429 aa).

This sequence belongs to the class-II aminoacyl-tRNA synthetase family. Homodimer.

The protein resides in the cytoplasm. It carries out the reaction tRNA(Asn) + L-asparagine + ATP = L-asparaginyl-tRNA(Asn) + AMP + diphosphate + H(+). This Desulforamulus reducens (strain ATCC BAA-1160 / DSM 100696 / MI-1) (Desulfotomaculum reducens) protein is Asparagine--tRNA ligase.